The primary structure comprises 104 residues: Small ribosomal subunit protein uS10 (104 aa).

Belongs to the universal ribosomal protein uS10 family. In terms of assembly, part of the 30S ribosomal subunit.

Functionally, involved in the binding of tRNA to the ribosomes. This is Small ribosomal subunit protein uS10 from Buchnera aphidicola subsp. Baizongia pistaciae (strain Bp).